The following is a 159-amino-acid chain: Cyclic pyranopterin monophosphate synthase (159 aa).

Substrate contacts are provided by residues 75–77 (LCH) and 113–114 (ME). Aspartate 128 is an active-site residue.

It belongs to the MoaC family. As to quaternary structure, homohexamer; trimer of dimers.

It catalyses the reaction (8S)-3',8-cyclo-7,8-dihydroguanosine 5'-triphosphate = cyclic pyranopterin phosphate + diphosphate. It functions in the pathway cofactor biosynthesis; molybdopterin biosynthesis. Functionally, catalyzes the conversion of (8S)-3',8-cyclo-7,8-dihydroguanosine 5'-triphosphate to cyclic pyranopterin monophosphate (cPMP). This chain is Cyclic pyranopterin monophosphate synthase, found in Vibrio vulnificus (strain YJ016).